Here is a 347-residue protein sequence, read N- to C-terminus: Histidinol-phosphate aminotransferase (347 aa).

The residue at position 209 (Lys-209) is an N6-(pyridoxal phosphate)lysine.

The protein belongs to the class-II pyridoxal-phosphate-dependent aminotransferase family. Histidinol-phosphate aminotransferase subfamily. In terms of assembly, homodimer. Pyridoxal 5'-phosphate serves as cofactor.

It carries out the reaction L-histidinol phosphate + 2-oxoglutarate = 3-(imidazol-4-yl)-2-oxopropyl phosphate + L-glutamate. It functions in the pathway amino-acid biosynthesis; L-histidine biosynthesis; L-histidine from 5-phospho-alpha-D-ribose 1-diphosphate: step 7/9. The protein is Histidinol-phosphate aminotransferase of Syntrophotalea carbinolica (strain DSM 2380 / NBRC 103641 / GraBd1) (Pelobacter carbinolicus).